The chain runs to 144 residues: Small ribosomal subunit protein eS12 (144 aa).

It belongs to the eukaryotic ribosomal protein eS12 family.

This chain is Small ribosomal subunit protein eS12 (RPS12), found in Trypanosoma brucei brucei.